A 92-amino-acid polypeptide reads, in one-letter code: Acylphosphatase (92 aa).

One can recognise an Acylphosphatase-like domain in the interval 3–92; the sequence is TKHVLVSGIV…GPRSTHFEVT (90 aa). Active-site residues include Arg18 and Asn36.

The protein belongs to the acylphosphatase family.

It carries out the reaction an acyl phosphate + H2O = a carboxylate + phosphate + H(+). The sequence is that of Acylphosphatase (acyP) from Alcanivorax borkumensis (strain ATCC 700651 / DSM 11573 / NCIMB 13689 / SK2).